The sequence spans 141 residues: HTH-type transcriptional repressor NsrR (141 aa).

In terms of domain architecture, HTH rrf2-type spans 2-129 (QLTNFTDFGL…DKHTIQDMLT (128 aa)). Residues 28–51 (ITVVTETFDVSRNHMVKIINKLGQ) constitute a DNA-binding region (H-T-H motif). [2Fe-2S] cluster-binding residues include C91, C96, and C102.

Requires [2Fe-2S] cluster as cofactor.

Its function is as follows. Nitric oxide-sensitive repressor of genes involved in protecting the cell against nitrosative stress. May require iron for activity. This chain is HTH-type transcriptional repressor NsrR, found in Aliivibrio fischeri (strain ATCC 700601 / ES114) (Vibrio fischeri).